The sequence spans 350 residues: Beta-hexosaminidase (350 aa).

Residues aspartate 62, arginine 70, arginine 133, and 163–164 (KH) each bind substrate. Histidine 176 functions as the Proton donor/acceptor in the catalytic mechanism. The active-site Nucleophile is aspartate 248.

Belongs to the glycosyl hydrolase 3 family. NagZ subfamily.

It is found in the cytoplasm. The enzyme catalyses Hydrolysis of terminal non-reducing N-acetyl-D-hexosamine residues in N-acetyl-beta-D-hexosaminides.. It participates in cell wall biogenesis; peptidoglycan recycling. Functionally, plays a role in peptidoglycan recycling by cleaving the terminal beta-1,4-linked N-acetylglucosamine (GlcNAc) from peptide-linked peptidoglycan fragments, giving rise to free GlcNAc, anhydro-N-acetylmuramic acid and anhydro-N-acetylmuramic acid-linked peptides. In Haemophilus influenzae (strain PittEE), this protein is Beta-hexosaminidase.